The sequence spans 658 residues: Threonine--tRNA ligase (658 aa).

Residues 1 to 64 (MSCSVSLSFP…GQSGQIEIIT (64 aa)) form the TGS domain. The segment at 246–549 (DHRRLGREMD…LIENFAGHMP (304 aa)) is catalytic. Residues C343, H394, and H526 each coordinate Zn(2+).

It belongs to the class-II aminoacyl-tRNA synthetase family. As to quaternary structure, homodimer. It depends on Zn(2+) as a cofactor.

It localises to the cytoplasm. The catalysed reaction is tRNA(Thr) + L-threonine + ATP = L-threonyl-tRNA(Thr) + AMP + diphosphate + H(+). Functionally, catalyzes the attachment of threonine to tRNA(Thr) in a two-step reaction: L-threonine is first activated by ATP to form Thr-AMP and then transferred to the acceptor end of tRNA(Thr). Also edits incorrectly charged L-seryl-tRNA(Thr). The sequence is that of Threonine--tRNA ligase from Bartonella quintana (strain Toulouse) (Rochalimaea quintana).